The sequence spans 580 residues: F-box only protein 24 (580 aa).

The 47-residue stretch at 36–82 (PISIQLFPPELVEHIISFLPVRDLVALGQTCRYFHEVCDAEGVWRRI) folds into the F-box domain. Residues 376-425 (GRIFMQGNNRYGQLGTGDKMDRGEPTQVRYLQRPITLWCGLNHSLVLSQS) form an RCC1 repeat.

Directly interacts with SKP1 and CUL1.

Its function is as follows. Substrate-recognition component of the SCF (SKP1-CUL1-F-box protein)-type E3 ubiquitin ligase complex. This is F-box only protein 24 (FBXO24) from Macaca fascicularis (Crab-eating macaque).